A 328-amino-acid polypeptide reads, in one-letter code: Aryl-hydrocarbon-interacting protein-like 1 (328 aa).

The PPIase FKBP-type domain occupies 53–145 (KQVGHPMHII…DLDELQKEPQ (93 aa)). TPR repeat units lie at residues 178 to 211 (VPIL…LRNL), 230 to 263 (NTLI…HPGI), and 264 to 297 (VKAY…EPSM).

Directly interacts with NUB1.

It localises to the cytoplasm. Its subcellular location is the nucleus. Functionally, may be important in protein trafficking and/or protein folding and stabilization. This is Aryl-hydrocarbon-interacting protein-like 1 (AIPL1) from Bos taurus (Bovine).